Reading from the N-terminus, the 488-residue chain is Protein nucleotidyltransferase YdiU (488 aa).

ATP-binding residues include Gly-91, Gly-93, Arg-94, Lys-114, Asp-126, Gly-127, Arg-177, and Arg-184. Residue Asp-253 is the Proton acceptor of the active site. 2 residues coordinate Mg(2+): Asn-254 and Asp-263. Residue Asp-263 coordinates ATP.

The protein belongs to the SELO family. Mg(2+) serves as cofactor. The cofactor is Mn(2+).

It carries out the reaction L-seryl-[protein] + ATP = 3-O-(5'-adenylyl)-L-seryl-[protein] + diphosphate. The catalysed reaction is L-threonyl-[protein] + ATP = 3-O-(5'-adenylyl)-L-threonyl-[protein] + diphosphate. It catalyses the reaction L-tyrosyl-[protein] + ATP = O-(5'-adenylyl)-L-tyrosyl-[protein] + diphosphate. The enzyme catalyses L-histidyl-[protein] + UTP = N(tele)-(5'-uridylyl)-L-histidyl-[protein] + diphosphate. It carries out the reaction L-seryl-[protein] + UTP = O-(5'-uridylyl)-L-seryl-[protein] + diphosphate. The catalysed reaction is L-tyrosyl-[protein] + UTP = O-(5'-uridylyl)-L-tyrosyl-[protein] + diphosphate. Its function is as follows. Nucleotidyltransferase involved in the post-translational modification of proteins. It can catalyze the addition of adenosine monophosphate (AMP) or uridine monophosphate (UMP) to a protein, resulting in modifications known as AMPylation and UMPylation. The sequence is that of Protein nucleotidyltransferase YdiU from Bacillus mycoides (strain KBAB4) (Bacillus weihenstephanensis).